We begin with the raw amino-acid sequence, 138 residues long: Nucleoside diphosphate kinase (138 aa).

The ATP site is built by Lys10, Phe58, Arg86, Thr92, Arg103, and Asn113. Residue His116 is the Pros-phosphohistidine intermediate of the active site.

The protein belongs to the NDK family. In terms of assembly, homotetramer. It depends on Mg(2+) as a cofactor.

It is found in the cytoplasm. It carries out the reaction a 2'-deoxyribonucleoside 5'-diphosphate + ATP = a 2'-deoxyribonucleoside 5'-triphosphate + ADP. The enzyme catalyses a ribonucleoside 5'-diphosphate + ATP = a ribonucleoside 5'-triphosphate + ADP. Major role in the synthesis of nucleoside triphosphates other than ATP. The ATP gamma phosphate is transferred to the NDP beta phosphate via a ping-pong mechanism, using a phosphorylated active-site intermediate. The chain is Nucleoside diphosphate kinase from Actinobacillus pleuropneumoniae serotype 7 (strain AP76).